A 385-amino-acid polypeptide reads, in one-letter code: Chaperone protein DnaJ (385 aa).

Residues 5–72 (DYYEVLGVGK…QKRAAYDQFG (68 aa)) form the J domain. Positions 26–48 (RKLAMKHHPDRNQGDGAKASEEK) are disordered. Residues 35 to 48 (DRNQGDGAKASEEK) are compositionally biased toward basic and acidic residues. The segment at 145 to 223 (GKESQIRIPT…CNGAGKVKKQ (79 aa)) adopts a CR-type zinc-finger fold. Residues cysteine 158, cysteine 161, cysteine 175, cysteine 178, cysteine 197, cysteine 200, cysteine 211, and cysteine 214 each coordinate Zn(2+). CXXCXGXG motif repeat units follow at residues 158–165 (CDTCHGSG), 175–182 (CTTCHGAG), 197–204 (CPHCHGSG), and 211–218 (CTSCNGAG). The tract at residues 362–385 (FRKGGDKHSPTSKSWTDRVKDLFK) is disordered.

Belongs to the DnaJ family. Homodimer. Zn(2+) serves as cofactor.

The protein resides in the cytoplasm. In terms of biological role, participates actively in the response to hyperosmotic and heat shock by preventing the aggregation of stress-denatured proteins and by disaggregating proteins, also in an autonomous, DnaK-independent fashion. Unfolded proteins bind initially to DnaJ; upon interaction with the DnaJ-bound protein, DnaK hydrolyzes its bound ATP, resulting in the formation of a stable complex. GrpE releases ADP from DnaK; ATP binding to DnaK triggers the release of the substrate protein, thus completing the reaction cycle. Several rounds of ATP-dependent interactions between DnaJ, DnaK and GrpE are required for fully efficient folding. Also involved, together with DnaK and GrpE, in the DNA replication of plasmids through activation of initiation proteins. The polypeptide is Chaperone protein DnaJ (Leptothrix cholodnii (strain ATCC 51168 / LMG 8142 / SP-6) (Leptothrix discophora (strain SP-6))).